A 387-amino-acid polypeptide reads, in one-letter code: Succinate--CoA ligase [ADP-forming] subunit beta (387 aa).

Positions 9-236 constitute an ATP-grasp domain; sequence KELFAKHNVP…KDATDPLELK (228 aa). Residues K45, 52-54, S94, and E99 each bind ATP; that span reads GRG. Mg(2+)-binding residues include N191 and D205. Residues N256 and 318 to 320 each bind substrate; that span reads GIT.

The protein belongs to the succinate/malate CoA ligase beta subunit family. Heterotetramer of two alpha and two beta subunits. It depends on Mg(2+) as a cofactor.

It catalyses the reaction succinate + ATP + CoA = succinyl-CoA + ADP + phosphate. The enzyme catalyses GTP + succinate + CoA = succinyl-CoA + GDP + phosphate. The protein operates within carbohydrate metabolism; tricarboxylic acid cycle; succinate from succinyl-CoA (ligase route): step 1/1. Functionally, succinyl-CoA synthetase functions in the citric acid cycle (TCA), coupling the hydrolysis of succinyl-CoA to the synthesis of either ATP or GTP and thus represents the only step of substrate-level phosphorylation in the TCA. The beta subunit provides nucleotide specificity of the enzyme and binds the substrate succinate, while the binding sites for coenzyme A and phosphate are found in the alpha subunit. The protein is Succinate--CoA ligase [ADP-forming] subunit beta of Mycolicibacterium gilvum (strain PYR-GCK) (Mycobacterium gilvum (strain PYR-GCK)).